The sequence spans 258 residues: Imidazole glycerol phosphate synthase subunit HisF (258 aa).

Residues D12 and D131 contribute to the active site.

Belongs to the HisA/HisF family. In terms of assembly, heterodimer of HisH and HisF.

It localises to the cytoplasm. It carries out the reaction 5-[(5-phospho-1-deoxy-D-ribulos-1-ylimino)methylamino]-1-(5-phospho-beta-D-ribosyl)imidazole-4-carboxamide + L-glutamine = D-erythro-1-(imidazol-4-yl)glycerol 3-phosphate + 5-amino-1-(5-phospho-beta-D-ribosyl)imidazole-4-carboxamide + L-glutamate + H(+). It functions in the pathway amino-acid biosynthesis; L-histidine biosynthesis; L-histidine from 5-phospho-alpha-D-ribose 1-diphosphate: step 5/9. Functionally, IGPS catalyzes the conversion of PRFAR and glutamine to IGP, AICAR and glutamate. The HisF subunit catalyzes the cyclization activity that produces IGP and AICAR from PRFAR using the ammonia provided by the HisH subunit. This is Imidazole glycerol phosphate synthase subunit HisF from Nitrosomonas eutropha (strain DSM 101675 / C91 / Nm57).